Here is a 174-residue protein sequence, read N- to C-terminus: Larval cuticle protein A1A (174 aa).

2 consecutive repeat copies span residues 45-48 (AAPV) and 67-70 (AAPV). The Chitin-binding type R&amp;R domain occupies 84–150 (NPQYSFGYDV…AVVHREPLVA (67 aa)). Repeat unit 3 spans residues 155-158 (AAPA).

In terms of biological role, component of the cuticle of the larva of Tenebrio molitor. The polypeptide is Larval cuticle protein A1A (Tenebrio molitor (Yellow mealworm beetle)).